The chain runs to 219 residues: Small ribosomal subunit protein uS2m (219 aa).

It belongs to the universal ribosomal protein uS2 family. As to quaternary structure, component of the mitochondrial ribosome small subunit.

Its subcellular location is the mitochondrion. This chain is Small ribosomal subunit protein uS2m (RPS2), found in Arabidopsis thaliana (Mouse-ear cress).